The primary structure comprises 173 residues: NADH-ubiquinone oxidoreductase chain 6 (173 aa).

Helical transmembrane passes span 1–21 (MTYF…AVAS), 27–47 (YGVV…LSLG), 48–68 (VSFV…VVFV), 87–107 (VVGY…VGGF), and 139–159 (CGVG…FVVL).

Belongs to the complex I subunit 6 family.

Its subcellular location is the mitochondrion membrane. The enzyme catalyses a ubiquinone + NADH + 5 H(+)(in) = a ubiquinol + NAD(+) + 4 H(+)(out). Core subunit of the mitochondrial membrane respiratory chain NADH dehydrogenase (Complex I) that is believed to belong to the minimal assembly required for catalysis. Complex I functions in the transfer of electrons from NADH to the respiratory chain. The immediate electron acceptor for the enzyme is believed to be ubiquinone. This chain is NADH-ubiquinone oxidoreductase chain 6 (MT-ND6), found in Aethia pusilla (Least auklet).